The following is a 98-amino-acid chain: Large ribosomal subunit protein bL27 (98 aa).

Residues 1 to 10 constitute a propeptide that is removed on maturation; it reads MELKMNLQLF. Residues 11–30 form a disordered region; it reads AQKKGTGSSKNGRDSISKRL.

This sequence belongs to the bacterial ribosomal protein bL27 family. The N-terminus is cleaved by ribosomal processing cysteine protease Prp.

The protein is Large ribosomal subunit protein bL27 of Natranaerobius thermophilus (strain ATCC BAA-1301 / DSM 18059 / JW/NM-WN-LF).